Here is a 611-residue protein sequence, read N- to C-terminus: MNRKTHIPVENETKSSATRTTNDGRAITYEMQVLQQPQRARACGQGAKSSADRRPVDPPPIVELKIFEGEKRDDITYTMHANYFLFATLEQARPIAHARGQDRNTHPVLTGTPVAGMVYLDRPTPAGYFIFPDLSVRHEGEYRLSFSLYEELKNPKDEDKPEEACDAAGGDAHVTHRLEVKSAPFHVYSAKKFPGLTESTHLSRMVAEQGCRVRIRRDVRMRRREPKSGGKDWDEYEEDTAAARARASATPDPSINGYMQTPHGFIEPNPRPRSASNASHQSLGSISRRPSMQEMGQAYHQQPHYGTAPHTPQNGYTQTAPYGPPPGQQYPPNQFVQQQPPMQPPLPQYQPPNYPAPPPPVTAAQQPQPAQSYYNYPAAPPPPQATQVQQYNVSAHAYDSGVQSHRPSIDFPAQDGYRRNSQQIPPTSQPTAYTQPMQPQYAAQMPPAQHYQQPPPPPPSQASQHSSYSSMDLYNSRPAPIEPHHHGNTPASKASFDLPPINTAAMVSNKLEASSPTSVAPTNAYFSGGQTPIDTHKRSYGDVFSNRHHNAPLRQGQRPSYGQGDSLVTGTTMSAADDDDNASSELDPSTLGMHYRRADGRQIQRALPGHA.

3 disordered regions span residues 1–57 (MNRK…RPVD), 222–497 (RRRE…ASFD), and 511–611 (LEAS…PGHA). Residues 14–23 (KSSATRTTND) are compositionally biased toward polar residues. The region spanning 24-216 (GRAITYEMQV…AEQGCRVRIR (193 aa)) is the Velvet domain. The Nuclear localization signal motif lies at 38–43 (QRARAC). Low complexity predominate over residues 242-254 (AARARASATPDPS). Residues 274 to 290 (SASNASHQSLGSISRRP) are compositionally biased toward polar residues. Low complexity predominate over residues 330 to 340 (YPPNQFVQQQP). Positions 341–361 (PMQPPLPQYQPPNYPAPPPPV) are enriched in pro residues. Positions 362-377 (TAAQQPQPAQSYYNYP) are enriched in low complexity. Positions 419-434 (RNSQQIPPTSQPTAYT) are enriched in polar residues. Low complexity-rich tracts occupy residues 435–452 (QPMQ…QHYQ) and 461–471 (QASQHSSYSSM). The interval 455–499 (PPPPPSQASQHSSYSSMDLYNSRPAPIEPHHHGNTPASKASFDLP) is PEST. A compositionally biased stretch (polar residues) spans 511 to 533 (LEASSPTSVAPTNAYFSGGQTPI).

This sequence belongs to the velvet family. VeA subfamily. Component of the heterotrimeric velvet complex composed of laeA, veA and velB; VeA acting as a bridging protein between laeA and velB.

It localises to the nucleus. The protein resides in the cytoplasm. Component of the velvet transcription factor complex that controls sexual/asexual developmental ratio in response to light, promoting sexual development in the darkness while stimulating asexual sporulation under illumination. The velvet complex hat acts as a global regulator for secondary metabolite gene expression. Controls the expression of the dothistromin gene cluster. Regulates hyphal growth and pigment formation. Acts as a positive regulator of virulence. This chain is Developmental and secondary metabolism regulator veA, found in Dothistroma septosporum (strain NZE10 / CBS 128990) (Red band needle blight fungus).